We begin with the raw amino-acid sequence, 526 residues long: Beta,beta-carotene 15,15'-dioxygenase (526 aa).

Fe cation is bound by residues H172, H236, H307, and H512.

Belongs to the carotenoid oxygenase family. Requires Fe(2+) as cofactor.

The protein resides in the cytoplasm. It is found in the cytosol. It catalyses the reaction all-trans-beta-carotene + O2 = 2 all-trans-retinal. The protein operates within cofactor metabolism; retinol metabolism. In terms of biological role, symmetrically cleaves beta-carotene into two molecules of retinal using a dioxygenase mechanism. The sequence is that of Beta,beta-carotene 15,15'-dioxygenase from Gallus gallus (Chicken).